An 836-amino-acid chain; its full sequence is Serine/threonine-protein kinase 1 (836 aa).

A compositionally biased stretch (basic residues) spans 1 to 12 (MDHNSPKSRRSR). The segment at 1–244 (MDHNSPKSRR…SLPDSITRED (244 aa)) is disordered. Basic and acidic residues predominate over residues 28-40 (SDSDSDQGRDRDK). 3 stretches are compositionally biased toward acidic residues: residues 64-75 (DGEGEEDDDDDS), 95-105 (DYDDDDGDESG), and 145-163 (EESS…DDGD). A compositionally biased stretch (polar residues) spans 224–238 (MQQQNSKMSTTSLPD). The region spanning 249 to 503 (YEFLNELGKG…AAEMLKHKFV (255 aa)) is the Protein kinase domain. ATP-binding positions include 255-263 (LGKGSYGSV) and K278. D371 functions as the Proton acceptor in the catalytic mechanism. Disordered stretches follow at residues 539-571 (LEDT…APLT), 600-640 (EDET…DSWI), and 760-780 (TSSD…PLPP). A compositionally biased stretch (polar residues) spans 562-571 (PQNSTEAPLT). Residues 606-618 (SDSRSQLVREKES) are compositionally biased toward basic and acidic residues.

Belongs to the protein kinase superfamily. STE Ser/Thr protein kinase family. STE20 subfamily. As to quaternary structure, interacts with MOB1A and MOB1B via its N-terminal region at the plasma membrane and in the nucleus. Binds to BIK1 to phosphorylate and stabilize it. Interacts with and phosphorylates RBOHD upon flagellin perception to activate it. It depends on Mn(2+) as a cofactor. Autophosphorylates. As to expression, mostly expressed in mature tissues of roots, shoots, hypocotyls, cotyledons, stems, leaves and flowers, as well as in the shoot apical meristem (SAM).

Its subcellular location is the cell membrane. The protein localises to the nucleus. The protein resides in the golgi apparatus. It localises to the trans-Golgi network. It is found in the early endosome. The catalysed reaction is L-seryl-[protein] + ATP = O-phospho-L-seryl-[protein] + ADP + H(+). The enzyme catalyses L-threonyl-[protein] + ATP = O-phospho-L-threonyl-[protein] + ADP + H(+). Functionally, serine/threonine-protein kinase. Regulates organ size in coordination with MOB1A by modulating cell proliferation and cell expansion, possibly by facilitating cell cycle exit. Positive regulator of the pathogen-associated molecular pattern (PAMP, e.g. flg22)-triggered immunity (PTI) signaling by stabilizing BIK1 and activating RBOHD by phosphorylation to promote the extracellular reactive oxygen species (ROS) burst involved in defense responses to bacterial infection. The polypeptide is Serine/threonine-protein kinase 1 (Arabidopsis thaliana (Mouse-ear cress)).